A 405-amino-acid polypeptide reads, in one-letter code: L-cysteine:1D-myo-inositol 2-amino-2-deoxy-alpha-D-glucopyranoside ligase (405 aa).

Cysteine 43 contacts Zn(2+). L-cysteinyl-5'-AMP is bound by residues 43–46 (CGIT), threonine 58, and 81–83 (NIT). The 'HIGH' region motif lies at 45 to 55 (ITPYDATHLGH). The 'ERGGDP' region signature appears at 187-192 (ERGGDP). Tryptophan 227 is an L-cysteinyl-5'-AMP binding site. Residue cysteine 231 coordinates Zn(2+). An L-cysteinyl-5'-AMP-binding site is contributed by 249–251 (GSD). Histidine 256 contacts Zn(2+). Isoleucine 283 is a binding site for L-cysteinyl-5'-AMP. A 'KMSKS' region motif is present at residues 289 to 293 (KMSKS).

It belongs to the class-I aminoacyl-tRNA synthetase family. MshC subfamily. Monomer. Zn(2+) serves as cofactor.

It catalyses the reaction 1D-myo-inositol 2-amino-2-deoxy-alpha-D-glucopyranoside + L-cysteine + ATP = 1D-myo-inositol 2-(L-cysteinylamino)-2-deoxy-alpha-D-glucopyranoside + AMP + diphosphate + H(+). Catalyzes the ATP-dependent condensation of GlcN-Ins and L-cysteine to form L-Cys-GlcN-Ins. This Nakamurella multipartita (strain ATCC 700099 / DSM 44233 / CIP 104796 / JCM 9543 / NBRC 105858 / Y-104) (Microsphaera multipartita) protein is L-cysteine:1D-myo-inositol 2-amino-2-deoxy-alpha-D-glucopyranoside ligase.